The following is a 401-amino-acid chain: All trans-polyprenyl-diphosphate synthase PDSS2 (401 aa).

The protein belongs to the FPP/GGPP synthase family. In terms of assembly, heterotetramer composed of 2 PDSS1/DPS1 and 2 PDSS2/DLP1 subunits.

It is found in the mitochondrion. It catalyses the reaction 7 isopentenyl diphosphate + (2E,6E)-farnesyl diphosphate = all-trans-decaprenyl diphosphate + 7 diphosphate. It carries out the reaction 6 isopentenyl diphosphate + (2E,6E)-farnesyl diphosphate = all-trans-nonaprenyl diphosphate + 6 diphosphate. It participates in cofactor biosynthesis; ubiquinone biosynthesis. In terms of biological role, heterotetrameric enzyme that catalyzes the condensation of farnesyl diphosphate (FPP), which acts as a primer, and isopentenyl diphosphate (IPP) to produce prenyl diphosphates of varying chain lengths and participates in the determination of the side chain of ubiquinone. Supplies nona and decaprenyl diphosphate, the precursors for the side chain of the isoprenoid quinones ubiquinone-9 (Q9) and ubiquinone-10 (Q10) respectively. The enzyme adds isopentenyl diphosphate molecules sequentially to farnesyl diphosphate with trans stereochemistry. May play a role during cerebellar development. May regulate mitochondrial respiratory chain function. This Rattus norvegicus (Rat) protein is All trans-polyprenyl-diphosphate synthase PDSS2.